Reading from the N-terminus, the 398-residue chain is Glutamyl-tRNA reductase (398 aa).

Substrate is bound by residues 45–48 (TCNR), serine 88, 93–95 (EDQ), and glutamine 99. Cysteine 46 functions as the Nucleophile in the catalytic mechanism. 168-173 (GAGKMG) contacts NADP(+).

It belongs to the glutamyl-tRNA reductase family. As to quaternary structure, homodimer.

The enzyme catalyses (S)-4-amino-5-oxopentanoate + tRNA(Glu) + NADP(+) = L-glutamyl-tRNA(Glu) + NADPH + H(+). The protein operates within porphyrin-containing compound metabolism; protoporphyrin-IX biosynthesis; 5-aminolevulinate from L-glutamyl-tRNA(Glu): step 1/2. Functionally, catalyzes the NADPH-dependent reduction of glutamyl-tRNA(Glu) to glutamate 1-semialdehyde (GSA). This chain is Glutamyl-tRNA reductase (hemA), found in Methanothermobacter marburgensis (strain ATCC BAA-927 / DSM 2133 / JCM 14651 / NBRC 100331 / OCM 82 / Marburg) (Methanobacterium thermoautotrophicum).